Reading from the N-terminus, the 402-residue chain is Apolipoprotein L3 (402 aa).

The protein belongs to the apolipoprotein L family. Widely expressed; the highest levels are in prostate, lung and placenta; also detected in kidney, bone marrow, spleen, thymus, spinal cord, adrenal gland, salivary gland, trachea and mammary gland; levels are low in brain, heart, fetal liver, pancreas and testis.

Its subcellular location is the cytoplasm. In terms of biological role, may affect the movement of lipids in the cytoplasm or allow the binding of lipids to organelles. This Homo sapiens (Human) protein is Apolipoprotein L3 (APOL3).